The primary structure comprises 492 residues: Pre-mRNA-splicing factor sap61 (492 aa).

The segment at 243 to 267 (FYCEVCQKFFGKITVFEAHKKSKAH) adopts a C2H2-type zinc-finger fold. Disordered regions lie at residues 268–291 (NKAV…KQKG) and 337–365 (AAER…QDDE). Residues 276–286 (SSSPSTTSNTN) are compositionally biased toward low complexity. Over residues 345–354 (QSTPSVSVEG) the composition is skewed to polar residues. Residues 355–365 (NQDEESDQDDE) show a composition bias toward acidic residues. Serine 360 carries the post-translational modification Phosphoserine. The segment at 397–428 (FPCEICGNYVYMGRKAFDKHFTEQRHIYGLKC) adopts a Matrin-type zinc-finger fold.

It belongs to the SF3A3 family. As to quaternary structure, belongs to the 40S cdc5-associated complex (or cwf complex), a spliceosome sub-complex reminiscent of a late-stage spliceosome composed of the U2, U5 and U6 snRNAs and at least brr2, cdc5, cwf2/prp3, cwf3/syf1, cwf4/syf3, cwf5/ecm2, spp42/cwf6, cwf7/spf27, cwf8, cwf9, cwf10, cwf11, cwf12, prp45/cwf13, cwf14, cwf15, cwf16, cwf17, cwf18, cwf19, cwf20, cwf21, cwf22, cwf23, cwf24, cwf25, cwf26, cyp7/cwf27, cwf28, cwf29/ist3, lea1, msl1, prp5/cwf1, prp10, prp12/sap130, prp17, prp22, sap61, sap62, sap114, sap145, slu7, smb1, smd1, smd3, smf1, smg1 and syf2.

Its subcellular location is the nucleus. The protein localises to the cytoplasm. Functionally, involved in mRNA splicing where it associates with cdc5 and the other cwf proteins as part of the spliceosome. The protein is Pre-mRNA-splicing factor sap61 (sap61) of Schizosaccharomyces pombe (strain 972 / ATCC 24843) (Fission yeast).